The primary structure comprises 33 residues: Brevinin-2Rk (33 aa).

A disulfide bridge connects residues Cys27 and Cys33.

In terms of tissue distribution, expressed by the skin glands.

It localises to the secreted. Antimicrobial peptide. In Pelophylax ridibundus (Marsh frog), this protein is Brevinin-2Rk.